The primary structure comprises 336 residues: Fructose-1,6-bisphosphatase class 2 (336 aa).

Positions 33, 57, 85, and 88 each coordinate Mn(2+). Substrate contacts are provided by residues Glu-88 to Thr-90, Tyr-119, Lys-164 to Arg-166, Asp-186 to Asp-188, and Gly-210. A Mn(2+)-binding site is contributed by Glu-213.

It belongs to the FBPase class 2 family. As to quaternary structure, homodimer. Requires Mn(2+) as cofactor.

Its subcellular location is the cytoplasm. The catalysed reaction is beta-D-fructose 1,6-bisphosphate + H2O = beta-D-fructose 6-phosphate + phosphate. It participates in carbohydrate biosynthesis; gluconeogenesis. Catalyzes the hydrolysis of fructose 1,6-bisphosphate to fructose 6-phosphate. This Shigella flexneri protein is Fructose-1,6-bisphosphatase class 2 (glpX).